Reading from the N-terminus, the 504-residue chain is Glutamate--tRNA ligase (504 aa).

The short motif at 25–35 (PSPTGNPHVGL) is the 'HIGH' region element. Zn(2+)-binding residues include C122, C124, C149, and E151. Residues 270–274 (KLSKR) carry the 'KMSKS' region motif. K273 contributes to the ATP binding site.

It belongs to the class-I aminoacyl-tRNA synthetase family. Glutamate--tRNA ligase type 1 subfamily. Monomer. The cofactor is Zn(2+).

Its subcellular location is the cytoplasm. The catalysed reaction is tRNA(Glu) + L-glutamate + ATP = L-glutamyl-tRNA(Glu) + AMP + diphosphate. In terms of biological role, catalyzes the attachment of glutamate to tRNA(Glu) in a two-step reaction: glutamate is first activated by ATP to form Glu-AMP and then transferred to the acceptor end of tRNA(Glu). The chain is Glutamate--tRNA ligase from Streptomyces avermitilis (strain ATCC 31267 / DSM 46492 / JCM 5070 / NBRC 14893 / NCIMB 12804 / NRRL 8165 / MA-4680).